The following is a 444-amino-acid chain: MWLFTVNQVLRKMQRRHSSNTDNIPPERNRSQALSSEASVDEGGVFESLKAEAASPPALFSGLSGSLPTSSFPSSLVLGSSAGGGDVFIQMPASREEGGGRGEGGAYHHRQPHHHFHHGGHRGGSLLQHVGGDHRGHSEEGGDEQPGTPAPALSELKAVICWLQKGLPFILILLAKLCFQHKLGIAVCIGMASTFAYANSTLREQVSLKEKRSVLVILWILAFLAGNTLYVLYTFSSQQLYNSLIFLKPNLEMLDFFDLLWIVGIADFVLKYITIALKCLIVALPKIILAVKSKGKFYLVIEELSQLFRSLVPIQLWYKYIMGDDSSNSYFLGGVLIVLYSLCKSFDICGRVGGVRKALKLLCTSQNYGVRATGQQCTEAGDICAICQAEFREPLILLCQHVFCEECLCLWLDRERTCPLCRSVAVDTLRCWKDGATSAHFQVY.

Over 1–181 (MWLFTVNQVL…ILLAKLCFQH (181 aa)) the chain is Extracellular. 2 disordered regions span residues 13 to 41 (MQRR…ASVD) and 92 to 149 (PASR…PGTP). Positions 107 to 121 (YHHRQPHHHFHHGGH) are enriched in basic residues. Positions 131 to 140 (GGDHRGHSEE) are enriched in basic and acidic residues. The helical transmembrane segment at 182-202 (KLGIAVCIGMASTFAYANSTL) threads the bilayer. The Cytoplasmic segment spans residues 203–214 (REQVSLKEKRSV). The chain crosses the membrane as a helical span at residues 215–235 (LVILWILAFLAGNTLYVLYTF). Residues 236 to 255 (SSQQLYNSLIFLKPNLEMLD) are Extracellular-facing. A helical transmembrane segment spans residues 256-276 (FFDLLWIVGIADFVLKYITIA). The Cytoplasmic portion of the chain corresponds to 277 to 329 (LKCLIVALPKIILAVKSKGKFYLVIEELSQLFRSLVPIQLWYKYIMGDDSSNS). A helical transmembrane segment spans residues 330–350 (YFLGGVLIVLYSLCKSFDICG). The Extracellular segment spans residues 351 to 444 (RVGGVRKALK…GATSAHFQVY (94 aa)). The RING-type zinc-finger motif lies at 384 to 422 (CAICQAEFREPLILLCQHVFCEECLCLWLDRERTCPLCR).

The protein resides in the membrane. Functionally, E3 ubiquitin-protein ligase that negatively regulates IL3-dependent cellular responses through IL3RA ubiquitination and degradation by the proteasome, having an anti-inflammatory effect. The protein is E3 ubiquitin-protein ligase RNFT2 of Homo sapiens (Human).